A 435-amino-acid chain; its full sequence is Serine/threonine-protein kinase 40 (435 aa).

Over residues 1 to 10 (MKRRASDRGA) the composition is skewed to basic and acidic residues. Residues 1 to 25 (MKRRASDRGAGETSARAKALGSGIS) are disordered. The Protein kinase domain occupies 35-332 (FILGPRLGNS…DVLEALSAII (298 aa)). ATP is bound by residues 41 to 49 (LGNSPVPSI) and K66. The Proton acceptor role is filled by D197.

This sequence belongs to the protein kinase superfamily. CAMK Ser/Thr protein kinase family.

It is found in the nucleus. The protein resides in the cytoplasm. It carries out the reaction L-seryl-[protein] + ATP = O-phospho-L-seryl-[protein] + ADP + H(+). The enzyme catalyses L-threonyl-[protein] + ATP = O-phospho-L-threonyl-[protein] + ADP + H(+). May be a negative regulator of NF-kappa-B and p53-mediated gene transcription. This Pongo abelii (Sumatran orangutan) protein is Serine/threonine-protein kinase 40 (STK40).